Reading from the N-terminus, the 360-residue chain is DNA replication and repair protein RecF (360 aa).

ATP is bound at residue 33-40 (GENGSGKT).

This sequence belongs to the RecF family.

It is found in the cytoplasm. The RecF protein is involved in DNA metabolism; it is required for DNA replication and normal SOS inducibility. RecF binds preferentially to single-stranded, linear DNA. It also seems to bind ATP. This Rickettsia peacockii (strain Rustic) protein is DNA replication and repair protein RecF.